Reading from the N-terminus, the 343-residue chain is L-threonine 3-dehydrogenase (343 aa).

Residue Cys39 coordinates Zn(2+). Active-site charge relay system residues include Thr41 and His44. Zn(2+) is bound by residues His64, Glu65, Cys94, Cys97, Cys100, and Cys108. NAD(+) is bound by residues Ile176, Asp196, Arg201, 263-265, and 287-288; these read LGI and IY.

Belongs to the zinc-containing alcohol dehydrogenase family. As to quaternary structure, homotetramer. Requires Zn(2+) as cofactor.

The protein resides in the cytoplasm. The enzyme catalyses L-threonine + NAD(+) = (2S)-2-amino-3-oxobutanoate + NADH + H(+). Its pathway is amino-acid degradation; L-threonine degradation via oxydo-reductase pathway; glycine from L-threonine: step 1/2. Its function is as follows. Catalyzes the NAD(+)-dependent oxidation of L-threonine to 2-amino-3-ketobutyrate. The protein is L-threonine 3-dehydrogenase of Anaeromyxobacter sp. (strain Fw109-5).